A 154-amino-acid chain; its full sequence is Myoglobin (154 aa).

One can recognise a Globin domain in the interval 2–148 (GLSDGEWQLV…FRNDIAAKYK (147 aa)). Ser4 bears the Phosphoserine mark. His65 lines the nitrite pocket. Position 65 (His65) interacts with O2. 2 positions are modified to phosphothreonine: Thr68 and Thr75. His94 serves as a coordination point for heme b. Residue Ser121 is modified to Phosphoserine.

This sequence belongs to the globin family. As to quaternary structure, monomeric.

The protein resides in the cytoplasm. It localises to the sarcoplasm. It carries out the reaction Fe(III)-heme b-[protein] + nitric oxide + H2O = Fe(II)-heme b-[protein] + nitrite + 2 H(+). The catalysed reaction is H2O2 + AH2 = A + 2 H2O. Functionally, monomeric heme protein which primary function is to store oxygen and facilitate its diffusion within muscle tissues. Reversibly binds oxygen through a pentacoordinated heme iron and enables its timely and efficient release as needed during periods of heightened demand. Depending on the oxidative conditions of tissues and cells, and in addition to its ability to bind oxygen, it also has a nitrite reductase activity whereby it regulates the production of bioactive nitric oxide. Under stress conditions, like hypoxia and anoxia, it also protects cells against reactive oxygen species thanks to its pseudoperoxidase activity. In Mus musculus (Mouse), this protein is Myoglobin.